The sequence spans 271 residues: Ribosomal RNA small subunit methyltransferase A (271 aa).

His-11, Leu-13, Gly-38, Glu-58, Asp-86, and Asn-101 together coordinate S-adenosyl-L-methionine.

It belongs to the class I-like SAM-binding methyltransferase superfamily. rRNA adenine N(6)-methyltransferase family. RsmA subfamily.

The protein localises to the cytoplasm. The catalysed reaction is adenosine(1518)/adenosine(1519) in 16S rRNA + 4 S-adenosyl-L-methionine = N(6)-dimethyladenosine(1518)/N(6)-dimethyladenosine(1519) in 16S rRNA + 4 S-adenosyl-L-homocysteine + 4 H(+). Specifically dimethylates two adjacent adenosines (A1518 and A1519) in the loop of a conserved hairpin near the 3'-end of 16S rRNA in the 30S particle. May play a critical role in biogenesis of 30S subunits. The sequence is that of Ribosomal RNA small subunit methyltransferase A from Helicobacter acinonychis (strain Sheeba).